We begin with the raw amino-acid sequence, 305 residues long: Homoserine O-acetyltransferase (305 aa).

The active-site Acyl-thioester intermediate is Cys-142. Substrate contacts are provided by Lys-163 and Ser-192. His-235 acts as the Proton acceptor in catalysis. The active site involves Glu-237. Position 249 (Arg-249) interacts with substrate.

This sequence belongs to the MetA family.

The protein localises to the cytoplasm. The catalysed reaction is L-homoserine + acetyl-CoA = O-acetyl-L-homoserine + CoA. The protein operates within amino-acid biosynthesis; L-methionine biosynthesis via de novo pathway; O-acetyl-L-homoserine from L-homoserine: step 1/1. In terms of biological role, transfers an acetyl group from acetyl-CoA to L-homoserine, forming acetyl-L-homoserine. The chain is Homoserine O-acetyltransferase from Cereibacter sphaeroides (strain ATCC 17025 / ATH 2.4.3) (Rhodobacter sphaeroides).